We begin with the raw amino-acid sequence, 550 residues long: MSSDITGTAAWQKLRDHHAQIQSVHLRELFEKDPARGQELTVSAGDLFIDYSKHRVDRDTIGLLLELARSVDLEARRDAMFAGEHINTSEDRAVLHTALRLPADASLVVDGQDVVADVHEVLDRMGDFTDRVRSGEWRGATGERIKTVVNIGIGGSDLGPVMVYRALRHYADAGISVRFISNVDPADLVRSLSGLDPATTLFIVASKTFSTLETLTNATAARRWLLGGLGLGNEAVAKHFVAVSTHADRVAEFGIDTANMFGFWDWVGGRYSVDSAIGLSVMAAIGKERFAEFLAGFHAVDEHFRTAPLEENAPVLLGLIGLWYSNFFGAESRAVLPYSNDLVRFPAYLQQLTMESNGKSVRADGSPVPASTGEIFWGEPGTNGQHAFYQLLHQGTRLVPSDFIGFGEPTDDLPTADGTGSMHDLLMSNFFAQTKVLAFGKTAEEIAAEGTPEDLVPHKVMPGNRPSTTILAPKLTPSVIGQLIALYEHQVFVEGVVWGIDSFDQWGVELGKTQAVELQPVLTAAEEPAAQSDSSTDSLVRWYRRQRGRA.

The Proton donor role is filled by glutamate 355. Residues histidine 386 and lysine 512 contribute to the active site.

It belongs to the GPI family.

It is found in the cytoplasm. It carries out the reaction alpha-D-glucose 6-phosphate = beta-D-fructose 6-phosphate. It participates in carbohydrate biosynthesis; gluconeogenesis. Its pathway is carbohydrate degradation; glycolysis; D-glyceraldehyde 3-phosphate and glycerone phosphate from D-glucose: step 2/4. Its function is as follows. Catalyzes the reversible isomerization of glucose-6-phosphate to fructose-6-phosphate. In Rhodococcus opacus (strain B4), this protein is Glucose-6-phosphate isomerase.